The sequence spans 345 residues: NADH-ubiquinone oxidoreductase chain 2 (345 aa).

The next 9 membrane-spanning stretches (helical) occupy residues 25–45 (HWLLAWMGLEINTLAIIPLMT), 60–80 (FLTQAAASALLLFSSLNNAWL), 99–119 (TIAICMKLGLAPFHFWLPEVL), 149–171 (LNTPLLLTLGLTSTLIGGWGGLN), 178–198 (ILAFSSIAHLGWMISILPFSP), 199–219 (QLMILNLTIYLIMTSTMFLVL), 242–262 (ALSLLTLLSLGGLPPLSGFVP), 282–302 (LALSALLSLFFYLRLTYIVTL), and 324–344 (LLLSIALILSSFIIPISPLTL).

Belongs to the complex I subunit 2 family. In terms of assembly, core subunit of respiratory chain NADH dehydrogenase (Complex I) which is composed of 45 different subunits.

The protein localises to the mitochondrion inner membrane. The enzyme catalyses a ubiquinone + NADH + 5 H(+)(in) = a ubiquinol + NAD(+) + 4 H(+)(out). Its function is as follows. Core subunit of the mitochondrial membrane respiratory chain NADH dehydrogenase (Complex I) which catalyzes electron transfer from NADH through the respiratory chain, using ubiquinone as an electron acceptor. Essential for the catalytic activity and assembly of complex I. This chain is NADH-ubiquinone oxidoreductase chain 2 (mt-nd2), found in Xenopus laevis (African clawed frog).